A 506-amino-acid chain; its full sequence is ATP synthase subunit alpha (506 aa).

Position 171–178 (171–178 (GDRQTGKT)) interacts with ATP.

Belongs to the ATPase alpha/beta chains family. F-type ATPases have 2 components, CF(1) - the catalytic core - and CF(0) - the membrane proton channel. CF(1) has five subunits: alpha(3), beta(3), gamma(1), delta(1), epsilon(1). CF(0) has four main subunits: a, b, b' and c.

The protein localises to the cellular thylakoid membrane. The catalysed reaction is ATP + H2O + 4 H(+)(in) = ADP + phosphate + 5 H(+)(out). Functionally, produces ATP from ADP in the presence of a proton gradient across the membrane. The alpha chain is a regulatory subunit. The polypeptide is ATP synthase subunit alpha (Nostoc punctiforme (strain ATCC 29133 / PCC 73102)).